The primary structure comprises 375 residues: Queuine tRNA-ribosyltransferase (375 aa).

Asp-89 serves as the catalytic Proton acceptor. Residues 89–93 (DSGGF), Asp-143, Gln-187, and Gly-214 each bind substrate. Positions 245–251 (GVGKPED) are RNA binding. The active-site Nucleophile is Asp-264. Positions 269-273 (TRNAR) are RNA binding; important for wobble base 34 recognition. 4 residues coordinate Zn(2+): Cys-302, Cys-304, Cys-307, and His-333.

It belongs to the queuine tRNA-ribosyltransferase family. In terms of assembly, homodimer. Within each dimer, one monomer is responsible for RNA recognition and catalysis, while the other monomer binds to the replacement base PreQ1. Requires Zn(2+) as cofactor.

It catalyses the reaction 7-aminomethyl-7-carbaguanine + guanosine(34) in tRNA = 7-aminomethyl-7-carbaguanosine(34) in tRNA + guanine. Its pathway is tRNA modification; tRNA-queuosine biosynthesis. Catalyzes the base-exchange of a guanine (G) residue with the queuine precursor 7-aminomethyl-7-deazaguanine (PreQ1) at position 34 (anticodon wobble position) in tRNAs with GU(N) anticodons (tRNA-Asp, -Asn, -His and -Tyr). Catalysis occurs through a double-displacement mechanism. The nucleophile active site attacks the C1' of nucleotide 34 to detach the guanine base from the RNA, forming a covalent enzyme-RNA intermediate. The proton acceptor active site deprotonates the incoming PreQ1, allowing a nucleophilic attack on the C1' of the ribose to form the product. After dissociation, two additional enzymatic reactions on the tRNA convert PreQ1 to queuine (Q), resulting in the hypermodified nucleoside queuosine (7-(((4,5-cis-dihydroxy-2-cyclopenten-1-yl)amino)methyl)-7-deazaguanosine). The chain is Queuine tRNA-ribosyltransferase from Citrobacter koseri (strain ATCC BAA-895 / CDC 4225-83 / SGSC4696).